A 263-amino-acid polypeptide reads, in one-letter code: Protein M1425_2021 (263 aa).

It belongs to the CinA family.

The protein is Protein M1425_2021 of Saccharolobus islandicus (strain M.14.25 / Kamchatka #1) (Sulfolobus islandicus).